We begin with the raw amino-acid sequence, 550 residues long: Amino acid transporter AVT1C (550 aa).

The span at 1–11 shows a compositional bias: polar residues; sequence MNHVPSDQSFY. Disordered regions lie at residues 1–44 and 128–148; these read MNHV…ENQA and QGLL…EKSS. Over residues 20–34 the composition is skewed to basic and acidic residues; the sequence is RKDYVEEDGGSHSDS. Helical transmembrane passes span 165 to 185, 190 to 210, 237 to 257, 283 to 303, 307 to 327, 342 to 362, 377 to 397, 422 to 442, 462 to 484, 488 to 510, and 521 to 541; these read AVLN…PYAA, WLGL…GILL, IFVS…YIIL, LFAL…DLSV, ISAG…WIGL, LSTL…HAVF, AVLL…AVMG, IAVW…ISPV, IGIR…FFGL, LIGS…LSIV, and LCVL…YSAL.

This sequence belongs to the amino acid/polyamine transporter 2 family. Amino acid/auxin permease (AAAP) (TC 2.A.18.5) subfamily.

The protein localises to the membrane. This Arabidopsis thaliana (Mouse-ear cress) protein is Amino acid transporter AVT1C.